The chain runs to 112 residues: Large ribosomal subunit protein uL22 (112 aa).

It belongs to the universal ribosomal protein uL22 family. Part of the 50S ribosomal subunit.

Functionally, this protein binds specifically to 23S rRNA; its binding is stimulated by other ribosomal proteins, e.g. L4, L17, and L20. It is important during the early stages of 50S assembly. It makes multiple contacts with different domains of the 23S rRNA in the assembled 50S subunit and ribosome. The globular domain of the protein is located near the polypeptide exit tunnel on the outside of the subunit, while an extended beta-hairpin is found that lines the wall of the exit tunnel in the center of the 70S ribosome. The sequence is that of Large ribosomal subunit protein uL22 from Legionella pneumophila subsp. pneumophila (strain Philadelphia 1 / ATCC 33152 / DSM 7513).